Consider the following 365-residue polypeptide: Cobalt-precorrin-5B C(1)-methyltransferase (365 aa).

The protein belongs to the CbiD family.

The catalysed reaction is Co-precorrin-5B + S-adenosyl-L-methionine = Co-precorrin-6A + S-adenosyl-L-homocysteine. Its pathway is cofactor biosynthesis; adenosylcobalamin biosynthesis; cob(II)yrinate a,c-diamide from sirohydrochlorin (anaerobic route): step 6/10. Functionally, catalyzes the methylation of C-1 in cobalt-precorrin-5B to form cobalt-precorrin-6A. The sequence is that of Cobalt-precorrin-5B C(1)-methyltransferase from Clostridium perfringens (strain SM101 / Type A).